We begin with the raw amino-acid sequence, 470 residues long: ATP synthase subunit beta (470 aa).

ATP is bound at residue 158 to 165 (GGAGVGKT).

The protein belongs to the ATPase alpha/beta chains family. As to quaternary structure, F-type ATPases have 2 components, CF(1) - the catalytic core - and CF(0) - the membrane proton channel. CF(1) has five subunits: alpha(3), beta(3), gamma(1), delta(1), epsilon(1). CF(0) has three main subunits: a(1), b(2) and c(9-12). The alpha and beta chains form an alternating ring which encloses part of the gamma chain. CF(1) is attached to CF(0) by a central stalk formed by the gamma and epsilon chains, while a peripheral stalk is formed by the delta and b chains.

The protein localises to the cell membrane. The enzyme catalyses ATP + H2O + 4 H(+)(in) = ADP + phosphate + 5 H(+)(out). Its function is as follows. Produces ATP from ADP in the presence of a proton gradient across the membrane. The catalytic sites are hosted primarily by the beta subunits. This Alkalihalophilus pseudofirmus (strain ATCC BAA-2126 / JCM 17055 / OF4) (Bacillus pseudofirmus) protein is ATP synthase subunit beta.